Here is a 204-residue protein sequence, read N- to C-terminus: Ribosomal RNA small subunit methyltransferase J (204 aa).

S-adenosyl-L-methionine contacts are provided by residues 55–56, 71–72, and Asp123; these read RD and ER.

The protein belongs to the methyltransferase superfamily. RsmJ family.

The protein localises to the cytoplasm. It catalyses the reaction guanosine(1516) in 16S rRNA + S-adenosyl-L-methionine = N(2)-methylguanosine(1516) in 16S rRNA + S-adenosyl-L-homocysteine + H(+). Functionally, specifically methylates the guanosine in position 1516 of 16S rRNA. This chain is Ribosomal RNA small subunit methyltransferase J, found in Rhodopseudomonas palustris (strain TIE-1).